Consider the following 255-residue polypeptide: Large ribosomal subunit protein uL4 (255 aa).

Belongs to the universal ribosomal protein uL4 family. In terms of assembly, part of the 50S ribosomal subunit.

Its function is as follows. One of the primary rRNA binding proteins, this protein initially binds near the 5'-end of the 23S rRNA. It is important during the early stages of 50S assembly. It makes multiple contacts with different domains of the 23S rRNA in the assembled 50S subunit and ribosome. In terms of biological role, forms part of the polypeptide exit tunnel. In Pyrococcus abyssi (strain GE5 / Orsay), this protein is Large ribosomal subunit protein uL4.